We begin with the raw amino-acid sequence, 519 residues long: Membrane-bound glycerophospholipid O-acyltransferase 2 (519 aa).

The next 6 membrane-spanning stretches (helical) occupy residues Pro-22–Phe-42, Thr-61–Val-81, Cys-88–Gly-108, Phe-184–Gly-204, Leu-236–Glu-256, and Tyr-288–Phe-305. Active-site residues include Asn-341 and His-372. The next 3 helical transmembrane spans lie at Phe-365 to Gly-385, Ile-415 to Leu-435, and Phe-443 to Pro-463.

Belongs to the membrane-bound acyltransferase family.

The protein localises to the endoplasmic reticulum membrane. It catalyses the reaction a 1-acyl-sn-glycero-3-phosphocholine + an acyl-CoA = a 1,2-diacyl-sn-glycero-3-phosphocholine + CoA. The enzyme catalyses a 1-acyl-sn-glycero-3-phosphoethanolamine + an acyl-CoA = a 1,2-diacyl-sn-glycero-3-phosphoethanolamine + CoA. It carries out the reaction a 1-acyl-sn-glycero-3-phosphate + an acyl-CoA = a 1,2-diacyl-sn-glycero-3-phosphate + CoA. The catalysed reaction is (9Z)-hexadecenoyl-CoA + 1-hexadecanoyl-sn-glycero-3-phosphocholine = 1-hexadecanoyl-2-(9Z-hexadecenoyl)-sn-glycero-3-phosphocholine + CoA. It catalyses the reaction 1-hexadecanoyl-sn-glycero-3-phosphoethanolamine + (9Z)-octadecenoyl-CoA = 1-hexadecanoyl-2-(9Z-octadecenoyl)-sn-glycero-3-phosphoethanolamine + CoA. The enzyme catalyses 1-hexadecanoyl-sn-glycero-3-phosphoethanolamine + (9Z)-hexadecenoyl-CoA = 1-hexadecanoyl-2-(9Z)-hexadecenoyl-sn-glycero-3-phosphoethanolamine + CoA. It carries out the reaction 1-(9Z-octadecenoyl)-sn-glycero-3-phospho-L-serine + hexadecanoyl-CoA = 1-(9Z)-octadecenoyl-2-hexadecanoyl-sn-glycero-3-phosphoserine + CoA. The catalysed reaction is (9Z,12Z)-octadecadienoyl-CoA + 1-hexadecanoyl-sn-glycero-3-phosphocholine = 1-hexadecanoyl-2-(9Z,12Z-octadecadienoyl)-sn-glycero-3-phosphocholine + CoA. It catalyses the reaction 1-hexadecanoyl-sn-glycero-3-phosphocholine + (9Z)-octadecenoyl-CoA = 1-hexadecanoyl-2-(9Z-octadecenoyl)-sn-glycero-3-phosphocholine + CoA. The enzyme catalyses 1-hexadecanoyl-sn-glycero-3-phosphate + (9Z)-hexadecenoyl-CoA = 1-hexadecanoyl-2-[(9Z)-hexadec-9-enoyl]-sn-glycero-3-phosphate + CoA. It carries out the reaction 1-hexadecanoyl-sn-glycero-3-phosphate + (9Z)-octadecenoyl-CoA = 1-hexadecanoyl-2-(9Z-octadecenoyl)-sn-glycero-3-phosphate + CoA. The catalysed reaction is a 1-O-(1Z-alkenyl)-sn-glycero-3-phosphocholine + (9Z)-octadecenoyl-CoA = 1-O-(1Z)-alkenyl-2-(9Z)-octadecenoyl-sn-glycero-3-phosphocholine + CoA. It catalyses the reaction a 1-O-(1Z-alkenyl)-sn-glycero-3-phosphoethanolamine + (9Z)-octadecenoyl-CoA = 1-O-(1Z)-alkenyl-2-(9Z)-octadecenoyl-sn-glycero-3-phosphoethanolamine + CoA. The enzyme catalyses 1-octadecanoyl-sn-glycero-3-phosphoethanolamine + (9Z)-octadecenoyl-CoA = 1-octadecanoyl-2-(9Z-octadecenoyl)-sn-glycero-3-phosphoethanolamine + CoA. It carries out the reaction 1-octadecanoyl-sn-glycero-3-phosphocholine + (9Z)-octadecenoyl-CoA = 1-octadecanoyl-2-(9Z-octadecenoyl)-sn-glycero-3-phosphocholine + CoA. The catalysed reaction is 1-(9Z-octadecenoyl)-sn-glycero-3-phosphoethanolamine + (9Z)-octadecenoyl-CoA = 1,2-di-(9Z-octadecenoyl)-sn-glycero-3-phosphoethanolamine + CoA. The protein operates within lipid metabolism; phospholipid metabolism. With respect to regulation, partially inhibited by thimerosal. Acyltransferase which catalyzes the transfer of an acyl group from an acyl-CoA to a lysophospholipid leading to the production of a phospholipid and participates in the reacylation step of the phospholipid remodeling pathway also known as the Lands cycle. May catalyze preferentially the acylation of lysophosphatidylethanolamine (1-acyl-sn-glycero-3-phosphoethanolamine or LPE) and lysophosphatidic acid (LPA) and to a lesser extend lysophosphatidylcholine (LPC) and lysophosphatidylserine (LPS). Prefers oleoyl-CoA as the acyl donor. May be involved in chondrocyte differentiation. The protein is Membrane-bound glycerophospholipid O-acyltransferase 2 of Rattus norvegicus (Rat).